A 257-amino-acid polypeptide reads, in one-letter code: UPF0246 protein ECA3888 (257 aa).

Belongs to the UPF0246 family.

The chain is UPF0246 protein ECA3888 from Pectobacterium atrosepticum (strain SCRI 1043 / ATCC BAA-672) (Erwinia carotovora subsp. atroseptica).